The chain runs to 484 residues: 6-phosphogluconate dehydrogenase, decarboxylating (484 aa).

NADP(+) contacts are provided by residues G10 to G15, N33 to T35, I75 to A77, and N103. Substrate contacts are provided by residues N103 and S129 to G131. The Proton acceptor role is filled by K183. H186–N187 provides a ligand contact to substrate. E190 acts as the Proton donor in catalysis. Y191, K260, R287, R448, and H454 together coordinate substrate.

It belongs to the 6-phosphogluconate dehydrogenase family. As to quaternary structure, homodimer.

It catalyses the reaction 6-phospho-D-gluconate + NADP(+) = D-ribulose 5-phosphate + CO2 + NADPH. Its pathway is carbohydrate degradation; pentose phosphate pathway; D-ribulose 5-phosphate from D-glucose 6-phosphate (oxidative stage): step 3/3. Catalyzes the oxidative decarboxylation of 6-phosphogluconate to ribulose 5-phosphate and CO(2), with concomitant reduction of NADP to NADPH. The sequence is that of 6-phosphogluconate dehydrogenase, decarboxylating from Caenorhabditis elegans.